Consider the following 525-residue polypeptide: ADP-ribosylation factor GTPase-activating protein 3 (525 aa).

Residues 10–126 enclose the Arf-GAP domain; it reads LAIFKRLRSV…IKTLATQATR (117 aa). The segment at 25–48 adopts a C4-type zinc-finger fold; sequence CFDCGAKNPSWASISYGVFLCIDC. The disordered stretch occupies residues 160 to 233; the sequence is VSGATQASAQ…KGLGAKKGSL (74 aa). Positions 162-177 are enriched in polar residues; it reads GATQASAQPEPASSTP. Low complexity predominate over residues 222 to 233; it reads AKKGLGAKKGSL. A phosphoserine mark is found at Ser232, Ser242, Ser271, and Ser275. The interval 249–271 is disordered; sequence QAQAVDKRKEQEDLARGTPKEES. Basic and acidic residues predominate over residues 293-305; sequence LNLSGQKKAEAER. Disordered stretches follow at residues 293 to 364 and 377 to 428; these read LNLS…SSSR and FSSW…EAQK. The segment covering 319–333 has biased composition (polar residues); that stretch reads HSVTSDMQTIEQESP. Ser332 carries the post-translational modification Phosphoserine. Low complexity predominate over residues 349–363; sequence SYFSSSSKWSEQSSS. Ser379 carries the post-translational modification Phosphoserine. Positions 387–398 are enriched in basic and acidic residues; the sequence is YWKKDSSRDPEP. 6 positions are modified to phosphoserine: Ser437, Ser460, Ser462, Ser464, Ser466, and Ser467.

Its subcellular location is the cytoplasm. It localises to the golgi apparatus membrane. Its activity is regulated as follows. GAP activity stimulated by phosphatidylinositol 4,5-bisphosphate (PIP2). In terms of biological role, GTPase-activating protein (GAP) for ADP ribosylation factor 1 (ARF1). Hydrolysis of ARF1-bound GTP may lead to dissociation of coatomer from Golgi-derived membranes to allow fusion with target membranes. This Rattus norvegicus (Rat) protein is ADP-ribosylation factor GTPase-activating protein 3.